Here is a 576-residue protein sequence, read N- to C-terminus: Zn(2)-C6 fungal-type transcription factor mpsE (576 aa).

The segment at residues 15–46 (CDRCRSHKLKCPQQPSTATGACQRCTRAKAQC) is a DNA-binding region (zn(2)-C6 fungal-type). Over residues 47-61 (TFSPRSRAIKNTQDG) the composition is skewed to polar residues. 3 disordered regions span residues 47-123 (TFSP…GTFD), 334-369 (VAHA…SSTA), and 404-424 (HPAP…LHRR). The span at 95–109 (PPQQQQSDQQKPSGS) shows a compositional bias: low complexity.

It is found in the nucleus. Its function is as follows. Transcription factor; part of the gene cluster that mediates the biosynthesis of macrophasetins, 3-decalinoyltetramic acids (DTAs) which feature a tetramate (pyrrolidine-2,4-dione) unit connected to a decalin fragment and that have potent bioactivities. The sequence is that of Zn(2)-C6 fungal-type transcription factor mpsE from Macrophomina phaseolina (strain MS6) (Charcoal rot fungus).